Reading from the N-terminus, the 341-residue chain is Holliday junction branch migration complex subunit RuvB (341 aa).

Residues 1–180 (MAKSHTLNPE…FGIQLRLDYY (180 aa)) form a large ATPase domain (RuvB-L) region. ATP-binding residues include L19, R20, G61, K64, T65, T66, R170, Y180, and R217. T65 lines the Mg(2+) pocket. Residues 181-251 (NDEEMKQIVL…LCLKAFEKMG (71 aa)) form a small ATPAse domain (RuvB-S) region. Residues 254–341 (DLGLDGMDRQ…VHHGQDPTLF (88 aa)) are head domain (RuvB-H). Positions 309 and 314 each coordinate DNA.

It belongs to the RuvB family. Homohexamer. Forms an RuvA(8)-RuvB(12)-Holliday junction (HJ) complex. HJ DNA is sandwiched between 2 RuvA tetramers; dsDNA enters through RuvA and exits via RuvB. An RuvB hexamer assembles on each DNA strand where it exits the tetramer. Each RuvB hexamer is contacted by two RuvA subunits (via domain III) on 2 adjacent RuvB subunits; this complex drives branch migration. In the full resolvosome a probable DNA-RuvA(4)-RuvB(12)-RuvC(2) complex forms which resolves the HJ.

It localises to the cytoplasm. The enzyme catalyses ATP + H2O = ADP + phosphate + H(+). Functionally, the RuvA-RuvB-RuvC complex processes Holliday junction (HJ) DNA during genetic recombination and DNA repair, while the RuvA-RuvB complex plays an important role in the rescue of blocked DNA replication forks via replication fork reversal (RFR). RuvA specifically binds to HJ cruciform DNA, conferring on it an open structure. The RuvB hexamer acts as an ATP-dependent pump, pulling dsDNA into and through the RuvAB complex. RuvB forms 2 homohexamers on either side of HJ DNA bound by 1 or 2 RuvA tetramers; 4 subunits per hexamer contact DNA at a time. Coordinated motions by a converter formed by DNA-disengaged RuvB subunits stimulates ATP hydrolysis and nucleotide exchange. Immobilization of the converter enables RuvB to convert the ATP-contained energy into a lever motion, pulling 2 nucleotides of DNA out of the RuvA tetramer per ATP hydrolyzed, thus driving DNA branch migration. The RuvB motors rotate together with the DNA substrate, which together with the progressing nucleotide cycle form the mechanistic basis for DNA recombination by continuous HJ branch migration. Branch migration allows RuvC to scan DNA until it finds its consensus sequence, where it cleaves and resolves cruciform DNA. The chain is Holliday junction branch migration complex subunit RuvB from Leptospira interrogans serogroup Icterohaemorrhagiae serovar copenhageni (strain Fiocruz L1-130).